A 151-amino-acid chain; its full sequence is F-box protein GID2 (151 aa).

Over residues 1–25 the composition is skewed to basic and acidic residues; that stretch reads MKRSTTDSDLAGDAHNETNKKMKST. The interval 1–27 is disordered; sequence MKRSTTDSDLAGDAHNETNKKMKSTEE. An F-box domain is found at 29–75; it reads EIGFSNLDENLVYEVLKHVDAKTLAMSSCVSKIWHKTAQDERLWELI.

Part of some SCF(GID2) complex, which consist of SKP1B, CUL1 cullin, GID2/SLY1 and some RING box protein. Interacts directly with SKP1A and SKP1B. Interacts directly with DELLA proteins GAI, RGA, RGL1, RGL3 and probably RGL2. May have a higher affinity for phosphorylated DELLA proteins. Expressed in all tissues tested, including rosette leaves, green siliques, flowers, stems, cauline leaves and seedlings.

It localises to the nucleus. It functions in the pathway protein modification; protein ubiquitination. In terms of biological role, essential component of the SCF-type E3 ligase complex, SCF(GID2), a complex that positively regulates the gibberellin signaling pathway. Upon gibberellin treatment, the SCF(GID2) complex mediates the ubiquitination and subsequent degradation of DELLA proteins (GAI, RGA and RGL2), some repressors of the gibberellin pathway, leading to activate the pathway. This is F-box protein GID2 (GID2) from Arabidopsis thaliana (Mouse-ear cress).